Reading from the N-terminus, the 430-residue chain is RPM1 interacting protein 13 (430 aa).

Positions 1-21 (MGSGNHVDIVDVSSGEEDVDT) are disordered. Residues 231–300 (RHRIRQPIPH…QVSQSSHHSS (70 aa)) are nuclear localization.

Interacts with RPM1 (via its NB-ARC domain). Binds to ARF1 in the nucleus.

It localises to the nucleus. Resistance protein interactor which positively enhances RPM1-mediated resistance to necrotrophic bacterial pathogens Pseudomonas syringae pv. tomato DC3000 harboring type III effector protein AvrRpm1 or AvrB, but prevents the hypersensitive response (HR) controlled by RPM1. Together with ARF1, promotes leaf senescence and cell death, probably by facilitating the translocation of ARF1 into the nucleus, and activates ROS-related enzymes (e.g. POD, CAT and SOD). The polypeptide is RPM1 interacting protein 13 (Arabidopsis thaliana (Mouse-ear cress)).